A 1415-amino-acid polypeptide reads, in one-letter code: DNA-directed RNA polymerase subunit beta' (1415 aa).

Residues cysteine 72, cysteine 74, cysteine 87, and cysteine 90 each coordinate Zn(2+). Residues aspartate 463, aspartate 465, and aspartate 467 each contribute to the Mg(2+) site. Zn(2+)-binding residues include cysteine 811, cysteine 885, cysteine 892, and cysteine 895.

This sequence belongs to the RNA polymerase beta' chain family. In terms of assembly, the RNAP catalytic core consists of 2 alpha, 1 beta, 1 beta' and 1 omega subunit. When a sigma factor is associated with the core the holoenzyme is formed, which can initiate transcription. It depends on Mg(2+) as a cofactor. Zn(2+) serves as cofactor.

It catalyses the reaction RNA(n) + a ribonucleoside 5'-triphosphate = RNA(n+1) + diphosphate. Functionally, DNA-dependent RNA polymerase catalyzes the transcription of DNA into RNA using the four ribonucleoside triphosphates as substrates. In Cereibacter sphaeroides (strain ATCC 17025 / ATH 2.4.3) (Rhodobacter sphaeroides), this protein is DNA-directed RNA polymerase subunit beta'.